The following is a 137-amino-acid chain: Small ribosomal subunit protein uS12 (137 aa).

Asp102 is subject to 3-methylthioaspartic acid.

It belongs to the universal ribosomal protein uS12 family. In terms of assembly, part of the 30S ribosomal subunit. Contacts proteins S8 and S17. May interact with IF1 in the 30S initiation complex.

With S4 and S5 plays an important role in translational accuracy. Functionally, interacts with and stabilizes bases of the 16S rRNA that are involved in tRNA selection in the A site and with the mRNA backbone. Located at the interface of the 30S and 50S subunits, it traverses the body of the 30S subunit contacting proteins on the other side and probably holding the rRNA structure together. The combined cluster of proteins S8, S12 and S17 appears to hold together the shoulder and platform of the 30S subunit. In Mesoplasma florum (strain ATCC 33453 / NBRC 100688 / NCTC 11704 / L1) (Acholeplasma florum), this protein is Small ribosomal subunit protein uS12.